The primary structure comprises 174 residues: Bifunctional protein PyrR 2 (174 aa).

Residues 39-40 (TR), 100-108 (DDVLFTGRT), and Arg133 each bind substrate. Residues 96–108 (VILVDDVLFTGRT) carry the PRPP-binding motif.

Belongs to the purine/pyrimidine phosphoribosyltransferase family. PyrR subfamily. Homodimer and homohexamer; in equilibrium.

The catalysed reaction is UMP + diphosphate = 5-phospho-alpha-D-ribose 1-diphosphate + uracil. Functionally, regulates transcriptional attenuation of the pyrimidine nucleotide (pyr) operon by binding in a uridine-dependent manner to specific sites on pyr mRNA. This disrupts an antiterminator hairpin in the RNA and favors formation of a downstream transcription terminator, leading to a reduced expression of downstream genes. In terms of biological role, also displays a weak uracil phosphoribosyltransferase activity which is not physiologically significant. In Lactiplantibacillus plantarum (strain ATCC BAA-793 / NCIMB 8826 / WCFS1) (Lactobacillus plantarum), this protein is Bifunctional protein PyrR 2 (pyrR2).